Here is a 218-residue protein sequence, read N- to C-terminus: Glutathione S-transferase Mu 4 (218 aa).

The region spanning 1–88 is the GST N-terminal domain; it reads MPMTLGYWDI…YIARKHNLCG (88 aa). Glutathione-binding positions include 7 to 8, 46 to 50, 59 to 60, and 72 to 73; these read YW, WLSEK, NL, and QS. The 119-residue stretch at 90 to 208 folds into the GST C-terminal domain; that stretch reads TEEEKIRVDI…KTSRFLRTPL (119 aa). Tyrosine 116 lines the substrate pocket.

It belongs to the GST superfamily. Mu family. In terms of assembly, homodimer.

It is found in the cytoplasm. The catalysed reaction is RX + glutathione = an S-substituted glutathione + a halide anion + H(+). The enzyme catalyses 1-chloro-2,4-dinitrobenzene + glutathione = 2,4-dinitrophenyl-S-glutathione + chloride + H(+). It carries out the reaction (13S,14S)-epoxy-(4Z,7Z,9E,11E,16Z,19Z)-docosahexaenoate + glutathione = (13R)-S-glutathionyl-(14S)-hydroxy-(4Z,7Z,9E,11E,16Z,19Z)-docosahexaenoate. It catalyses the reaction leukotriene C4 = leukotriene A4 + glutathione. Conjugation of reduced glutathione to a wide number of exogenous and endogenous hydrophobic electrophiles. Catalyzes the conjugation of leukotriene A4 with reduced glutathione (GSH) to form leukotriene C4. Can also catalyze the transfer of a glutathionyl group from glutathione (GSH) to 13(S),14(S)-epoxy-docosahexaenoic acid to form maresin conjugate in tissue regeneration 1 (MCTR1), a bioactive lipid mediator that possess potent anti-inflammatory and proresolving actions. This is Glutathione S-transferase Mu 4 (Gstm4) from Rattus norvegicus (Rat).